Here is a 403-residue protein sequence, read N- to C-terminus: Flagellar hook protein FlgE (403 aa).

The protein belongs to the flagella basal body rod proteins family.

The protein resides in the bacterial flagellum basal body. This is Flagellar hook protein FlgE (flgE) from Salmonella typhi.